Here is a 359-residue protein sequence, read N- to C-terminus: Peptide chain release factor 1 (359 aa).

Gln235 bears the N5-methylglutamine mark. The disordered stretch occupies residues 287–312; it reads AQEASAMRSAQVGSGDRSERIRTYNF.

It belongs to the prokaryotic/mitochondrial release factor family. In terms of processing, methylated by PrmC. Methylation increases the termination efficiency of RF1.

Its subcellular location is the cytoplasm. Peptide chain release factor 1 directs the termination of translation in response to the peptide chain termination codons UAG and UAA. The polypeptide is Peptide chain release factor 1 (Chlamydia trachomatis serovar L2 (strain ATCC VR-902B / DSM 19102 / 434/Bu)).